Consider the following 367-residue polypeptide: Glutamate 5-kinase (367 aa).

Lysine 10 contacts ATP. The substrate site is built by serine 50, aspartate 137, and asparagine 149. ATP-binding positions include 169–170 and 211–217; these read TD and TGGMSTK. The region spanning 275 to 353 is the PUA domain; the sequence is AGEITVDEGA…QQIDAILGYE (79 aa).

The protein belongs to the glutamate 5-kinase family.

It localises to the cytoplasm. It carries out the reaction L-glutamate + ATP = L-glutamyl 5-phosphate + ADP. It functions in the pathway amino-acid biosynthesis; L-proline biosynthesis; L-glutamate 5-semialdehyde from L-glutamate: step 1/2. Functionally, catalyzes the transfer of a phosphate group to glutamate to form L-glutamate 5-phosphate. The chain is Glutamate 5-kinase from Salmonella paratyphi A (strain ATCC 9150 / SARB42).